Consider the following 252-residue polypeptide: uncharacterized protein (252 aa).

One can recognise a Clp R domain in the interval 96–238 (FRRFTPRARN…ITTLASLTGA (143 aa)). Repeat regions lie at residues 99–164 (FTPR…PAVT) and 172–238 (FSGP…LTGA).

Belongs to the ClpA/ClpB family. ClpC subfamily.

This is an uncharacterized protein from Mycobacterium bovis (strain ATCC BAA-935 / AF2122/97).